A 94-amino-acid chain; its full sequence is Small ribosomal subunit protein uS17 (94 aa).

This sequence belongs to the universal ribosomal protein uS17 family. Part of the 30S ribosomal subunit.

One of the primary rRNA binding proteins, it binds specifically to the 5'-end of 16S ribosomal RNA. The sequence is that of Small ribosomal subunit protein uS17 from Symbiobacterium thermophilum (strain DSM 24528 / JCM 14929 / IAM 14863 / T).